Reading from the N-terminus, the 75-residue chain is Neuropeptide-like protein 31 (75 aa).

A signal peptide spans 1–22; sequence MISTSSILVLVVLLACFMAANA. A tyrosine amide mark is found at Y29, Y39, Y49, Y56, and Y64. W73 is subject to Tryptophan amide.

It belongs to the YARP (YGGW-amide related peptide) family. Expressed in hypoderm.

The protein localises to the secreted. Antimicrobial peptides that have antifungal activity against D.coniospora. Has weak antibacterial activity against Gram-positive bacteria M.luteus and Gram-negative E.coli. This is Neuropeptide-like protein 31 (nlp-31) from Caenorhabditis elegans.